Here is a 139-residue protein sequence, read N- to C-terminus: Large ribosomal subunit protein bL17 (139 aa).

The protein belongs to the bacterial ribosomal protein bL17 family. In terms of assembly, part of the 50S ribosomal subunit. Contacts protein L32.

The sequence is that of Large ribosomal subunit protein bL17 from Myxococcus xanthus (strain DK1622).